The chain runs to 280 residues: Pyridoxal 5'-phosphate synthase subunit PdxS (280 aa).

D12 contacts D-ribose 5-phosphate. K69 acts as the Schiff-base intermediate with D-ribose 5-phosphate in catalysis. D-ribose 5-phosphate is bound at residue G141. Residue R153 coordinates D-glyceraldehyde 3-phosphate. Residues G202 and 223-224 (GS) each bind D-ribose 5-phosphate.

It belongs to the PdxS/SNZ family. In terms of assembly, in the presence of PdxT, forms a dodecamer of heterodimers.

The enzyme catalyses aldehydo-D-ribose 5-phosphate + D-glyceraldehyde 3-phosphate + L-glutamine = pyridoxal 5'-phosphate + L-glutamate + phosphate + 3 H2O + H(+). Its pathway is cofactor biosynthesis; pyridoxal 5'-phosphate biosynthesis. Its function is as follows. Catalyzes the formation of pyridoxal 5'-phosphate from ribose 5-phosphate (RBP), glyceraldehyde 3-phosphate (G3P) and ammonia. The ammonia is provided by the PdxT subunit. Can also use ribulose 5-phosphate and dihydroxyacetone phosphate as substrates, resulting from enzyme-catalyzed isomerization of RBP and G3P, respectively. This Fusobacterium nucleatum subsp. nucleatum (strain ATCC 25586 / DSM 15643 / BCRC 10681 / CIP 101130 / JCM 8532 / KCTC 2640 / LMG 13131 / VPI 4355) protein is Pyridoxal 5'-phosphate synthase subunit PdxS.